The sequence spans 94 residues: Co-chaperonin GroES (94 aa).

The protein belongs to the GroES chaperonin family. Heptamer of 7 subunits arranged in a ring. Interacts with the chaperonin GroEL.

The protein resides in the cytoplasm. Together with the chaperonin GroEL, plays an essential role in assisting protein folding. The GroEL-GroES system forms a nano-cage that allows encapsulation of the non-native substrate proteins and provides a physical environment optimized to promote and accelerate protein folding. GroES binds to the apical surface of the GroEL ring, thereby capping the opening of the GroEL channel. In Shouchella clausii (strain KSM-K16) (Alkalihalobacillus clausii), this protein is Co-chaperonin GroES.